Consider the following 170-residue polypeptide: Adenine phosphoribosyltransferase (170 aa).

The protein belongs to the purine/pyrimidine phosphoribosyltransferase family. As to quaternary structure, homodimer.

It localises to the cytoplasm. The catalysed reaction is AMP + diphosphate = 5-phospho-alpha-D-ribose 1-diphosphate + adenine. Its pathway is purine metabolism; AMP biosynthesis via salvage pathway; AMP from adenine: step 1/1. Its function is as follows. Catalyzes a salvage reaction resulting in the formation of AMP, that is energically less costly than de novo synthesis. The protein is Adenine phosphoribosyltransferase of Geobacillus thermodenitrificans (strain NG80-2).